The following is a 269-amino-acid chain: uncharacterized protein (269 aa).

It belongs to the methyltransferase superfamily.

This is an uncharacterized protein from Mycobacterium leprae (strain Br4923).